Consider the following 133-residue polypeptide: UPF0102 protein Plav_3586 (133 aa).

This sequence belongs to the UPF0102 family.

In Parvibaculum lavamentivorans (strain DS-1 / DSM 13023 / NCIMB 13966), this protein is UPF0102 protein Plav_3586.